Consider the following 124-residue polypeptide: Acidic phospholipase A2 BA1 (124 aa).

7 disulfides stabilise this stretch: Cys-26/Cys-116, Cys-28/Cys-44, Cys-43/Cys-95, Cys-49/Cys-124, Cys-50/Cys-88, Cys-57/Cys-81, and Cys-75/Cys-86. Positions 27, 29, and 31 each coordinate Ca(2+). His-47 is a catalytic residue. Residue Asp-48 coordinates Ca(2+). Asp-89 is an active-site residue.

The protein belongs to the phospholipase A2 family. Group II subfamily. D49 sub-subfamily. The cofactor is Ca(2+). As to expression, expressed by the venom gland.

Its subcellular location is the secreted. The enzyme catalyses a 1,2-diacyl-sn-glycero-3-phosphocholine + H2O = a 1-acyl-sn-glycero-3-phosphocholine + a fatty acid + H(+). Functionally, PLA2 catalyzes the calcium-dependent hydrolysis of the 2-acyl groups in 3-sn-phosphoglycerides. The chain is Acidic phospholipase A2 BA1 from Gloydius halys (Chinese water mocassin).